Reading from the N-terminus, the 146-residue chain is Hemoglobin subunit beta-1 (146 aa).

Positions 2–146 constitute a Globin domain; the sequence is VWTNEERSII…VVSALGKQYH (145 aa). Heme b-binding residues include His63 and His92.

Belongs to the globin family. Hb1 is a heterotetramer of two alpha chains and two beta-1 chains. Red blood cells.

Involved in oxygen transport from gills to the various peripheral tissues. In Pseudaphritis urvillii (Congolli), this protein is Hemoglobin subunit beta-1 (hbb1).